A 371-amino-acid chain; its full sequence is Aminomethyltransferase (371 aa).

Belongs to the GcvT family. As to quaternary structure, the glycine cleavage system is composed of four proteins: P, T, L and H.

It carries out the reaction N(6)-[(R)-S(8)-aminomethyldihydrolipoyl]-L-lysyl-[protein] + (6S)-5,6,7,8-tetrahydrofolate = N(6)-[(R)-dihydrolipoyl]-L-lysyl-[protein] + (6R)-5,10-methylene-5,6,7,8-tetrahydrofolate + NH4(+). The glycine cleavage system catalyzes the degradation of glycine. In Pectobacterium atrosepticum (strain SCRI 1043 / ATCC BAA-672) (Erwinia carotovora subsp. atroseptica), this protein is Aminomethyltransferase.